Consider the following 140-residue polypeptide: Ribonuclease P protein component (140 aa).

Residues Arg-33 to Ala-54 form a disordered region.

The protein belongs to the RnpA family. As to quaternary structure, consists of a catalytic RNA component (M1 or rnpB) and a protein subunit.

The catalysed reaction is Endonucleolytic cleavage of RNA, removing 5'-extranucleotides from tRNA precursor.. Functionally, RNaseP catalyzes the removal of the 5'-leader sequence from pre-tRNA to produce the mature 5'-terminus. It can also cleave other RNA substrates such as 4.5S RNA. The protein component plays an auxiliary but essential role in vivo by binding to the 5'-leader sequence and broadening the substrate specificity of the ribozyme. This chain is Ribonuclease P protein component, found in Trichormus variabilis (strain ATCC 29413 / PCC 7937) (Anabaena variabilis).